We begin with the raw amino-acid sequence, 55 residues long: Ferredoxin (55 aa).

4Fe-4S ferredoxin-type domains lie at 2-27 (FVIN…TQGD) and 28-55 (TQFV…PNQE). Positions 8, 11, 14, 18, 37, 40, 43, and 47 each coordinate [4Fe-4S] cluster.

The cofactor is [4Fe-4S] cluster.

Its function is as follows. Ferredoxins are iron-sulfur proteins that transfer electrons in a wide variety of metabolic reactions. The polypeptide is Ferredoxin (Clostridium butyricum).